The following is a 4981-amino-acid chain: Protocadherin Fat 4 (4981 aa).

The signal sequence occupies residues 1 to 38 (MDLAPDRATGRPWLPLHTLSVSQLLRVFWLLSLLPGQA). Residues 39–4504 (WVHGAEPRQV…PEEISLPLWA (4466 aa)) lie on the Extracellular side of the membrane. Cadherin domains are found at residues 43–135 (AEPR…APVF), 136–250 (PDPS…PPVF), 251–353 (GSSH…DPVV), 359–475 (PATS…PPVF), 476–582 (SQQV…KPVF), 584–689 (QPEG…SPVF), 690–793 (YPVQ…PPVF), 794–893 (SQVA…SPHF), 894–996 (LQAI…SPVF), 997–1100 (DQLS…RPLF), 1101–1210 (NSTN…APKF), 1211–1315 (LKDF…TPSF), 1316–1420 (PKST…PPSF), 1421–1529 (PPGD…VPMF), 1529–1629 (FISQ…GPVF), 1630–1740 (TQPK…PPVF), 1741–1841 (PTDM…TPKF), 1842–1944 (SRPV…PPIF), 1945–2051 (SLNS…PPTF), 2051–2154 (FLSP…NPIF), 2155–2259 (AQAL…VPVF), 2260–2364 (ELSP…VPTF), 2365–2466 (ASKA…PPRF), 2467–2567 (QHHP…FPKV), 2568–2669 (RAKE…APIF), 2670–2773 (KEDP…APRF), 2773–2872 (FSQI…APRF), 2873–2983 (SRTS…APQF), 2984–3089 (LKSK…TPEF), 3090–3194 (SQSH…SPVF), 3195–3298 (LSDD…VPRF), 3299–3404 (VSKL…PPIF), 3405–3510 (TLNI…GPML), and 3509–3620 (MLTV…VEIF). Asn-84 and Asn-237 each carry an N-linked (GlcNAc...) asparagine glycan. Asn-393, Asn-416, Asn-435, Asn-483, Asn-551, Asn-615, Asn-676, Asn-721, Asn-825, Asn-880, Asn-946, Asn-1085, Asn-1101, Asn-1104, Asn-1225, Asn-1296, Asn-1389, and Asn-1514 each carry an N-linked (GlcNAc...) asparagine glycan. Asn-1828, Asn-1899, Asn-1967, and Asn-2119 each carry an N-linked (GlcNAc...) asparagine glycan. 2 N-linked (GlcNAc...) asparagine glycosylation sites follow: Asn-2387 and Asn-2430. Residues Asn-2921, Asn-2937, Asn-3036, Asn-3140, Asn-3217, Asn-3392, and Asn-3477 are each glycosylated (N-linked (GlcNAc...) asparagine). Asn-3706 and Asn-3758 each carry an N-linked (GlcNAc...) asparagine glycan. An EGF-like 1 domain is found at 3802–3860 (DHDSCVHGPCQNGGSCLRRLAVSSVLKSRESLPVIIVANEPLQPFLCKCLPGYAGSWCE). 12 disulfides stabilise this stretch: Cys-3806-Cys-3817, Cys-3811-Cys-3848, Cys-3850-Cys-3859, Cys-3866-Cys-3877, Cys-3871-Cys-3886, Cys-3888-Cys-3897, Cys-3904-Cys-3915, Cys-3909-Cys-3924, Cys-3926-Cys-3935, Cys-3942-Cys-3953, Cys-3947-Cys-3962, and Cys-3964-Cys-3973. Positions 3862-3898 (DIDECLPSPCHSGGTCHNLVGGFSCSCPDGFTGRACE) constitute an EGF-like 2; calcium-binding domain. The EGF-like 3; calcium-binding domain occupies 3900–3936 (DINECLQSPCKNGAICQNFPGSFNCVCKTGYTGKMCE). An EGF-like 4 domain is found at 3938–3974 (SVNYCECNPCFNGGSCQSGVDSYYCHCPFGVFGKHCE). Residues 3975 to 4159 (LNSYGFEELS…LAAQGILDQC (185 aa)) form the Laminin G-like 1 domain. Asn-4017 carries N-linked (GlcNAc...) asparagine glycosylation. Cystine bridges form between Cys-4133/Cys-4159, Cys-4166/Cys-4177, Cys-4171/Cys-4186, and Cys-4188/Cys-4197. Residues 4162 to 4198 (LEGACTRSPCQHGGTCMDYWSWQQCHCKEGLTGKYCE) enclose the EGF-like 5 domain. Positions 4217-4398 (YHMSQNEKRE…KTDPSVKIGC (182 aa)) constitute a Laminin G-like 2 domain. N-linked (GlcNAc...) asparagine glycans are attached at residues Asn-4267 and Asn-4312. 4 cysteine pairs are disulfide-bonded: Cys-4365/Cys-4398, Cys-4430/Cys-4441, Cys-4435/Cys-4451, and Cys-4453/Cys-4462. An EGF-like 6 domain is found at 4426–4463 (PPGDCASHPCQNGGSCEPGLHSGFTCSCPDSHTGRTCE). A helical membrane pass occupies residues 4505-4525 (VPAIVGSCATVLALLVLSLIL). Residues 4526–4981 (CNQCRGKKAK…PKDGEAEQYV (456 aa)) lie on the Cytoplasmic side of the membrane. Disordered regions lie at residues 4534–4584 (AKNP…PDII), 4680–4713 (QGLR…STFY), 4752–4856 (RSKS…MEYD), 4869–4911 (KLSQ…AAPG), and 4957–4981 (AAAN…EQYV). Polar residues predominate over residues 4680 to 4699 (QGLRTSSLSHSACPTPNPLS). Residues 4706–4795 (FSKSSTFYRN…GLSIEEVERL (90 aa)) are necessary and sufficient for interaction with MPDZ. Residues 4809–4821 (DHGRSSSEEDCRR) show a composition bias toward basic and acidic residues. Ser-4876 carries the post-translational modification Phosphoserine. Positions 4971 to 4981 (VPKDGEAEQYV) are enriched in basic and acidic residues.

Heterophilic interaction with DCHS1; this interaction affects their respective protein levels. Interacts (via cytoplasmic domain) with MPDZ. Forms a complex with PALS1 and MPDZ. Widely expressed. Expressed in fetal brain, infant brain, brain tumor and colorectal cancer.

The protein localises to the membrane. In terms of biological role, cadherins are calcium-dependent cell adhesion proteins. FAT4 plays a role in the maintenance of planar cell polarity as well as in inhibition of YAP1-mediated neuroprogenitor cell proliferation and differentiation. The sequence is that of Protocadherin Fat 4 (FAT4) from Homo sapiens (Human).